The sequence spans 101 residues: Small ribosomal subunit protein uS14 (101 aa).

A disordered region spans residues 48–69 (LSKLPRDSSPSRHRSRCELSGR). Residues 51-68 (LPRDSSPSRHRSRCELSG) show a composition bias toward basic and acidic residues.

The protein belongs to the universal ribosomal protein uS14 family. Part of the 30S ribosomal subunit. Contacts proteins S3 and S10.

Its function is as follows. Binds 16S rRNA, required for the assembly of 30S particles and may also be responsible for determining the conformation of the 16S rRNA at the A site. In Stenotrophomonas maltophilia (strain R551-3), this protein is Small ribosomal subunit protein uS14.